Here is a 946-residue protein sequence, read N- to C-terminus: Serine/arginine repetitive matrix protein 1 (946 aa).

Methionine 1 is modified (N-acetylmethionine). Positions 1 to 151 (MDAGFFRGTS…ASLKKQDEDK (151 aa)) are necessary for DNA and RNA-binding. The necessary for mRNA 3'-end cleavage and cytoplasmic accumulation stretch occupies residues 1-156 (MDAGFFRGTS…QDEDKDKRDK (156 aa)). Arginine 7 is subject to Citrulline. One can recognise a PWI domain in the interval 27–126 (QLKFAECLEK…AGIPSAFLEL (100 aa)). Lysine 127 is covalently cross-linked (Glycyl lysine isopeptide (Lys-Gly) (interchain with G-Cter in SUMO2)). N6-acetyllysine is present on lysine 140. The span at 142 to 170 (ASLKKQDEDKDKRDKEEKESSREKRERSR) shows a compositional bias: basic and acidic residues. The tract at residues 142-946 (ASLKKQDEDK…MRKAQVSPQS (805 aa)) is disordered. The segment covering 171 to 207 (SPRRRKSRSPSPRRRSSPVRRERKRSHSRSPRHRTKS) has biased composition (basic residues). A compositionally biased stretch (basic and acidic residues) spans 214–234 (PEKKEKSPELPEPSVRMKDSS). Serine 220 and serine 227 each carry phosphoserine. A Glycyl lysine isopeptide (Lys-Gly) (interchain with G-Cter in SUMO1); alternate cross-link involves residue lysine 231. Residue lysine 231 forms a Glycyl lysine isopeptide (Lys-Gly) (interchain with G-Cter in SUMO2); alternate linkage. 2 positions are modified to phosphoserine: serine 234 and serine 240. Phosphothreonine is present on threonine 241. A compositionally biased stretch (basic and acidic residues) spans 246–273 (KAPKPEPVPEPKEPSPEKNSKKEKEKTR). Residue lysine 249 forms a Glycyl lysine isopeptide (Lys-Gly) (interchain with G-Cter in SUMO2) linkage. Serine 260 is subject to Phosphoserine. 2 stretches are compositionally biased toward basic residues: residues 274–327 (PRSR…RTPP) and 334–349 (PRHR…RRRS). Residues 298 to 707 (RRHRSRSRSY…NKRHSPSPRP (410 aa)) are necessary for speckles and matrix localization. Positions 350 to 366 (SASLSGSSSSSSSSRSR) are enriched in low complexity. Serine 387, serine 389, serine 391, and serine 400 each carry phosphoserine. Threonine 404 bears the Phosphothreonine mark. Position 412 is a phosphoserine (serine 412). Threonine 414 is subject to Phosphothreonine. 4 positions are modified to phosphoserine: serine 418, serine 427, serine 429, and serine 434. A compositionally biased stretch (polar residues) spans 426-436 (VSVSPGRTSGK). Residue lysine 445 forms a Glycyl lysine isopeptide (Lys-Gly) (interchain with G-Cter in SUMO2) linkage. Serine 448 and serine 450 each carry phosphoserine. Residue lysine 457 forms a Glycyl lysine isopeptide (Lys-Gly) (interchain with G-Cter in SUMO2) linkage. Serine 461 and serine 463 each carry phosphoserine. Lysine 470 is covalently cross-linked (Glycyl lysine isopeptide (Lys-Gly) (interchain with G-Cter in SUMO2)). Serine 476 is modified (phosphoserine). The span at 476–499 (SVQQRRQYRRQNQQSSSDSGSSST) shows a compositional bias: low complexity. Residues 501 to 516 (EDERPKRSHVKNGEVG) show a composition bias toward basic and acidic residues. A phosphoserine mark is found at serine 522, serine 524, serine 526, serine 528, serine 530, serine 561, serine 563, serine 572, and serine 574. Basic residues predominate over residues 555-572 (SSRRRRSPSPPPARRRRS). Over residues 574–585 (SPAPPPPPPPPP) the composition is skewed to pro residues. The segment covering 586–611 (PRRRRSPTPPPRRRTPSPPPRRRSPS) has biased composition (basic residues). A phosphothreonine mark is found at threonine 593 and threonine 600. A Phosphoserine modification is found at serine 602. Positions 612 to 624 (PRRYSPPIQRRYS) are enriched in low complexity. A Phosphotyrosine modification is found at tyrosine 615. Serine 616, serine 624, and serine 626 each carry phosphoserine. A Phosphothreonine modification is found at threonine 633. Phosphoserine occurs at positions 635, 645, 647, 655, and 657. Positions 640-655 (PKRRASPSPPPKRRVS) are enriched in basic residues. The span at 668–682 (TKRRSPSLSSKHRKG) shows a compositional bias: basic residues. The segment covering 704–718 (SPRPRAPQTSSPPPV) has biased composition (pro residues). A phosphoserine mark is found at serine 713, serine 714, serine 723, serine 725, serine 731, and serine 733. Positions 724 to 736 (ASPQGRQSPSPST) are enriched in polar residues. Phosphothreonine is present on threonine 736. 10 positions are modified to phosphoserine: serine 779, serine 781, serine 789, serine 793, serine 795, serine 797, serine 810, serine 814, serine 816, and serine 818. A compositionally biased stretch (low complexity) spans 779 to 800 (SPSPQSVRRVSSSRSVSGSPEP). Phosphothreonine is present on threonine 819. 2 positions are modified to phosphoserine: serine 822 and serine 832. The span at 833–842 (PTPSLSPARN) shows a compositional bias: polar residues. A Phosphothreonine modification is found at threonine 834. Phosphoserine occurs at positions 836, 838, and 843. Residues 850–875 (KKKKKKKDKKHKKDKKHKKHKKHKKE) are compositionally biased toward basic residues. The span at 878-907 (VTIATPATAAPAAVSAATTTSAQEEPAAAP) shows a compositional bias: low complexity. Phosphothreonine is present on threonine 913. Serine 915 bears the Phosphoserine mark. A compositionally biased stretch (basic and acidic residues) spans 924 to 934 (DLERHLREKAL). Residue serine 943 is modified to Phosphoserine.

Belongs to the splicing factor SR family. Identified in the spliceosome C complex. Found in a pre-mRNA splicing complex with SFRS4, SFRS5, SNRP70, SNRPA1, SRRM1 and SRRM2. Component of the minor spliceosome, which splices U12-type introns. Found in a pre-mRNA exonic splicing enhancer (ESE) complex with SNRP70, SNRPA1, SRRM1 and TRA2B/SFRS10. Found in a mRNA splicing-dependent exon junction complex (EJC) with DEK, PRPF8, NCBP1, RBM8A, RNPS1, SRRM1 and ALYREF/THOC4. Interacts with DDX39B, CPSF1, RBM8A, RNPS1, and ALYREF/THOC4. Seems to be a compound of RNA export complexes that are released from speckles in a ATP-dependent manner. Post-translationally, citrullinated by PADI4. In terms of processing, phosphorylated on multiple serine and threonine residues by DYRK3 during the G2-to-M transition, after the nuclear-envelope breakdown. Phosphorylation by DYRK3 promotes disassembly of nuclear speckles.

The protein localises to the nucleus matrix. It localises to the nucleus speckle. Part of pre- and post-splicing multiprotein mRNP complexes. As a component of the minor spliceosome, involved in the splicing of U12-type introns in pre-mRNAs. Involved in numerous pre-mRNA processing events. Promotes constitutive and exonic splicing enhancer (ESE)-dependent splicing activation by bridging together sequence-specific (SR family proteins, SFRS4, SFRS5 and TRA2B/SFRS10) and basal snRNP (SNRP70 and SNRPA1) factors of the spliceosome. Stimulates mRNA 3'-end cleavage independently of the formation of an exon junction complex. Binds both pre-mRNA and spliced mRNA 20-25 nt upstream of exon-exon junctions. Binds RNA and DNA with low sequence specificity and has similar preference for either double- or single-stranded nucleic acid substrates. In Mus musculus (Mouse), this protein is Serine/arginine repetitive matrix protein 1 (Srrm1).